The primary structure comprises 512 residues: D-alanine--D-alanyl carrier protein ligase (512 aa).

An ATP-binding site is contributed by 152 to 153; the sequence is TS. A D-alanine-binding site is contributed by aspartate 199. 294–299 contacts ATP; the sequence is NAYGPT. Valine 303 contacts D-alanine. ATP is bound by residues aspartate 385, 397–400, and lysine 499; that span reads YGGR. Lysine 499 contacts D-alanine.

This sequence belongs to the ATP-dependent AMP-binding enzyme family. DltA subfamily.

It is found in the cytoplasm. The catalysed reaction is holo-[D-alanyl-carrier protein] + D-alanine + ATP = D-alanyl-[D-alanyl-carrier protein] + AMP + diphosphate. It participates in cell wall biogenesis; lipoteichoic acid biosynthesis. Functionally, catalyzes the first step in the D-alanylation of lipoteichoic acid (LTA), the activation of D-alanine and its transfer onto the D-alanyl carrier protein (Dcp) DltC. In an ATP-dependent two-step reaction, forms a high energy D-alanyl-AMP intermediate, followed by transfer of the D-alanyl residue as a thiol ester to the phosphopantheinyl prosthetic group of the Dcp. D-alanylation of LTA plays an important role in modulating the properties of the cell wall in Gram-positive bacteria, influencing the net charge of the cell wall. The sequence is that of D-alanine--D-alanyl carrier protein ligase from Streptococcus pyogenes serotype M1.